We begin with the raw amino-acid sequence, 473 residues long: GTPase Der (473 aa).

EngA-type G domains follow at residues 3 to 167 (FKVA…KGLE) and 203 to 378 (LRVA…TFWN). Residues 9 to 16 (GRPNVGKS), 56 to 60 (DTAGL), 119 to 122 (NKCE), 209 to 216 (GRPNVGKS), 256 to 260 (DTAGM), and 321 to 324 (NKWD) each bind GTP. In terms of domain architecture, KH-like spans 379–463 (ARVPTARLNR…PIRLFMRKTH (85 aa)).

The protein belongs to the TRAFAC class TrmE-Era-EngA-EngB-Septin-like GTPase superfamily. EngA (Der) GTPase family. As to quaternary structure, associates with the 50S ribosomal subunit.

In terms of biological role, GTPase that plays an essential role in the late steps of ribosome biogenesis. This Parvibaculum lavamentivorans (strain DS-1 / DSM 13023 / NCIMB 13966) protein is GTPase Der.